A 436-amino-acid chain; its full sequence is Diaminobutyrate--2-oxoglutarate transaminase (436 aa).

K269 is modified (N6-(pyridoxal phosphate)lysine).

It belongs to the class-III pyridoxal-phosphate-dependent aminotransferase family. It depends on pyridoxal 5'-phosphate as a cofactor.

It carries out the reaction L-2,4-diaminobutanoate + 2-oxoglutarate = L-aspartate 4-semialdehyde + L-glutamate. Its pathway is amine and polyamine biosynthesis; ectoine biosynthesis; L-ectoine from L-aspartate 4-semialdehyde: step 1/3. Catalyzes reversively the conversion of L-aspartate beta-semialdehyde (ASA) to L-2,4-diaminobutyrate (DABA) by transamination with L-glutamate. The protein is Diaminobutyrate--2-oxoglutarate transaminase (ectB) of Nocardia farcinica (strain IFM 10152).